The primary structure comprises 239 residues: Endonuclease V (239 aa).

Mg(2+)-binding residues include Asp50 and Asp118.

It belongs to the endonuclease V family. Mg(2+) serves as cofactor.

Its subcellular location is the cytoplasm. The catalysed reaction is Endonucleolytic cleavage at apurinic or apyrimidinic sites to products with a 5'-phosphate.. Functionally, DNA repair enzyme involved in the repair of deaminated bases. Selectively cleaves double-stranded DNA at the second phosphodiester bond 3' to a deoxyinosine leaving behind the intact lesion on the nicked DNA. In Xylella fastidiosa (strain Temecula1 / ATCC 700964), this protein is Endonuclease V.